Here is a 511-residue protein sequence, read N- to C-terminus: 2,3-bisphosphoglycerate-independent phosphoglycerate mutase (511 aa).

Positions 12 and 62 each coordinate Mn(2+). The active-site Phosphoserine intermediate is the S62. Substrate is bound by residues H123, 153–154 (RD), R185, R191, 260–263 (RPDR), and K335. The Mn(2+) site is built by D402, H406, D443, H444, and H462.

This sequence belongs to the BPG-independent phosphoglycerate mutase family. As to quaternary structure, monomer. Mn(2+) serves as cofactor.

The catalysed reaction is (2R)-2-phosphoglycerate = (2R)-3-phosphoglycerate. It functions in the pathway carbohydrate degradation; glycolysis; pyruvate from D-glyceraldehyde 3-phosphate: step 3/5. Its function is as follows. Catalyzes the interconversion of 2-phosphoglycerate and 3-phosphoglycerate. In Acetivibrio thermocellus (strain ATCC 27405 / DSM 1237 / JCM 9322 / NBRC 103400 / NCIMB 10682 / NRRL B-4536 / VPI 7372) (Clostridium thermocellum), this protein is 2,3-bisphosphoglycerate-independent phosphoglycerate mutase.